The primary structure comprises 138 residues: MLIPKRVKYRRQHRPHRSGVSKGGNRITFGDYGIQALEPAYITNRQIESARIAINRHVKRGGKVWINIFPDRPLTQKPLGVRMGSGKGPVEKWVANVKPGRILFEMSFPNEEVALEALRRAGQKLPCKVRIVKKEDQF.

A compositionally biased stretch (basic residues) spans 1-19; that stretch reads MLIPKRVKYRRQHRPHRSG. The disordered stretch occupies residues 1 to 24; the sequence is MLIPKRVKYRRQHRPHRSGVSKGG.

It belongs to the universal ribosomal protein uL16 family. Part of the 50S ribosomal subunit.

Binds 23S rRNA and is also seen to make contacts with the A and possibly P site tRNAs. The chain is Large ribosomal subunit protein uL16 from Corynebacterium diphtheriae (strain ATCC 700971 / NCTC 13129 / Biotype gravis).